The sequence spans 146 residues: uncharacterized protein (146 aa).

Residues 7-24 traverse the membrane as a helical segment; that stretch reads VIALFLVTGLTLYAIRLL.

It localises to the membrane. This is an uncharacterized protein from Haemophilus influenzae (strain ATCC 51907 / DSM 11121 / KW20 / Rd).